The primary structure comprises 173 residues: Alpha-crystallin A chain (173 aa).

Met1 carries the N-acetylmethionine modification. Residues 1–63 (MDVTIQHPWF…RTVLDSGISE (63 aa)) form a required for complex formation with BFSP1 and BFSP2 region. At Gln6 the chain carries Deamidated glutamine; partial. At Ser45 the chain carries Phosphoserine. 2 positions are modified to deamidated glutamine; partial: Gln50 and Gln90. The sHSP domain occupies 52–162 (LFRTVLDSGI…SHSERAIPVS (111 aa)). Lys99 is subject to N6-acetyllysine. Position 100 (His100) interacts with Zn(2+). Position 101 is a deamidated asparagine; partial (Asn101). Positions 102 and 107 each coordinate Zn(2+). Phosphoserine is present on Ser122. Residue Asn123 is modified to Deamidated asparagine; partial. A disulfide bond links Cys131 and Cys142. Deamidated glutamine; partial is present on Gln147. Residues 149-173 (GMDASHSERAIPVSREEKPSSAPSS) are disordered. Residues 153 to 167 (SHSERAIPVSREEKP) show a composition bias toward basic and acidic residues. His154 contacts Zn(2+). A glycan (O-linked (GlcNAc) serine) is linked at Ser162.

Belongs to the small heat shock protein (HSP20) family. As to quaternary structure, heteromer composed of three CRYAA and one CRYAB subunits. Inter-subunit bridging via zinc ions enhances stability, which is crucial as there is no protein turn over in the lens. Can also form homodimers and homotetramers (dimers of dimers) which serve as the building blocks of homooligomers. Within homooligomers, the zinc-binding motif is created from residues of 3 different molecules. His-100 and Glu-102 from one molecule are ligands of the zinc ion, and His-107 and His-154 residues from additional molecules complete the site with tetrahedral coordination geometry. Part of a complex required for lens intermediate filament formation composed of BFSP1, BFSP2 and CRYAA. Undergoes age-dependent proteolytical cleavage at the C-terminus.

It localises to the cytoplasm. The protein resides in the nucleus. Its function is as follows. Contributes to the transparency and refractive index of the lens. In its oxidized form (absence of intramolecular disulfide bond), acts as a chaperone, preventing aggregation of various proteins under a wide range of stress conditions. Required for the correct formation of lens intermediate filaments as part of a complex composed of BFSP1, BFSP2 and CRYAA. The protein is Alpha-crystallin A chain (CRYAA) of Loxodonta africana (African elephant).